Here is a 100-residue protein sequence, read N- to C-terminus: Nucleoid-associated protein RoseRS_1534 (100 aa).

This sequence belongs to the YbaB/EbfC family. Homodimer.

The protein localises to the cytoplasm. Its subcellular location is the nucleoid. Its function is as follows. Binds to DNA and alters its conformation. May be involved in regulation of gene expression, nucleoid organization and DNA protection. The chain is Nucleoid-associated protein RoseRS_1534 from Roseiflexus sp. (strain RS-1).